A 241-amino-acid chain; its full sequence is Uridylate kinase (241 aa).

Position 14-17 (14-17) interacts with ATP; sequence KLSG. Positions 22–27 are involved in allosteric activation by GTP; it reads GGLGMG. Gly56 lines the UMP pocket. 2 residues coordinate ATP: Gly57 and Arg61. UMP-binding positions include Asp77 and 138–145; that span reads TGNPFFTT. Residues Thr165, Tyr171, and Asp174 each coordinate ATP.

Belongs to the UMP kinase family. Homohexamer.

The protein localises to the cytoplasm. The enzyme catalyses UMP + ATP = UDP + ADP. The protein operates within pyrimidine metabolism; CTP biosynthesis via de novo pathway; UDP from UMP (UMPK route): step 1/1. With respect to regulation, allosterically activated by GTP. Inhibited by UTP. Functionally, catalyzes the reversible phosphorylation of UMP to UDP. In Psychrobacter sp. (strain PRwf-1), this protein is Uridylate kinase.